A 477-amino-acid polypeptide reads, in one-letter code: Solute carrier family 2, facilitated glucose transporter member 8 (477 aa).

Residues 1–25 (MSPEDPQETQPLLRPPEARTPRGRR) lie on the Cytoplasmic side of the membrane. Residues 12–13 (LL) carry the Dileucine internalization motif motif. A helical transmembrane segment spans residues 26 to 46 (VFLASFAAALGPLSFGFALGY). Topologically, residues 47–70 (SSPAIPSLRRTAPPALRLGDNAAS) are extracellular. Residues 71–91 (WFGAVVTLGAAAGGILGGWLL) form a helical membrane-spanning segment. The Cytoplasmic segment spans residues 92–96 (DRAGR). Residues 97–117 (KLSLLLCTVPFVTGFAVITAA) form a helical membrane-spanning segment. Topologically, residues 118 to 127 (RDVWMLLGGR) are extracellular. A helical transmembrane segment spans residues 128-148 (LLTGLACGVASLVAPVYISEI). Over 149–156 (AYPAVRGL) the chain is Cytoplasmic. A helical transmembrane segment spans residues 157–177 (LGSCVQLMVVTGILLAYVAGW). A D-glucose-binding site is contributed by Gln-162. The Extracellular portion of the chain corresponds to 178–182 (VLEWR). Residues 183–203 (WLAVLGCVPPTLMLLLMCYMP) traverse the membrane as a helical segment. Residues 204 to 257 (ETPRFLLTQHQYQEAMAALRFLWGSEEGWEEPPVGAEHQGFQLALLRRPGIYKP) are Cytoplasmic-facing. A helical membrane pass occupies residues 258–278 (LIIGISLMVFQQLSGVNAIMF). Residues 268-269 (QQ) and Asn-274 each bind D-glucose. At 279–293 (YANSIFEEAKFKDSS) the chain is on the extracellular side. The chain crosses the membrane as a helical span at residues 294 to 314 (LASVTVGIIQVLFTAVAALIM). Residues 315 to 320 (DRAGRR) are Cytoplasmic-facing. Residues 321–341 (LLLALSGVIMVFSMSAFGTYF) traverse the membrane as a helical segment. Topologically, residues 342-367 (KLTQSLPSNSSHVGLVPIAAEPVDVQ) are extracellular. An N-linked (GlcNAc...) asparagine glycan is attached at Asn-350. A helical transmembrane segment spans residues 368–388 (VGLAWLAVGSMCLFIAGFAVG). At 389 to 404 (WGPIPWLLMSEIFPLH) the chain is on the cytoplasmic side. Trp-394 is a D-glucose binding site. The chain crosses the membrane as a helical span at residues 405 to 425 (VKGVATGICVLTNWFMAFLVT). The Extracellular segment spans residues 426-438 (KEFSSVMEMLRPY). The chain crosses the membrane as a helical span at residues 439-459 (GAFWLTAAFCALSVLFTLTVV). Topologically, residues 460–477 (PETKGRTLEQVTAHFEGR) are cytoplasmic.

It belongs to the major facilitator superfamily. Sugar transporter (TC 2.A.1.1) family. Glucose transporter subfamily. Interacts with AP2B1. Also able to mediate the transport of dehydroascorbate. In terms of tissue distribution, highest level of expression in placenta and testis. Highly expressed in adult and pubertal testis, but not prepubertal testis. Lower levels of expression in brain, liver, heart, kidney, fat and skeletal muscle.

The protein localises to the cell membrane. The protein resides in the cytoplasmic vesicle membrane. It carries out the reaction D-glucose(out) = D-glucose(in). It catalyses the reaction D-fructose(out) = D-fructose(in). The catalysed reaction is L-dehydroascorbate(out) = L-dehydroascorbate(in). The enzyme catalyses alpha,alpha-trehalose(in) = alpha,alpha-trehalose(out). Its activity is regulated as follows. Inhibited by cytochalasin B. Its function is as follows. Insulin-regulated facilitative hexose transporter that mediates the transport of glucose and fructose. Facilitates hepatic influx of dietary trehalose, which in turn inhibits glucose and fructose influx triggering a starvation signal and hepatic autophagy through activation of AMPK and ULK1. Also able to mediate the transport of dehydroascorbate. This Mus musculus (Mouse) protein is Solute carrier family 2, facilitated glucose transporter member 8.